A 359-amino-acid polypeptide reads, in one-letter code: Histidinol-phosphate aminotransferase (359 aa).

Lysine 212 is modified (N6-(pyridoxal phosphate)lysine).

Belongs to the class-II pyridoxal-phosphate-dependent aminotransferase family. Histidinol-phosphate aminotransferase subfamily. As to quaternary structure, homodimer. It depends on pyridoxal 5'-phosphate as a cofactor.

It carries out the reaction L-histidinol phosphate + 2-oxoglutarate = 3-(imidazol-4-yl)-2-oxopropyl phosphate + L-glutamate. It participates in amino-acid biosynthesis; L-histidine biosynthesis; L-histidine from 5-phospho-alpha-D-ribose 1-diphosphate: step 7/9. This is Histidinol-phosphate aminotransferase from Buchnera aphidicola subsp. Schlechtendalia chinensis.